A 310-amino-acid polypeptide reads, in one-letter code: Olfactory receptor 4D1 (310 aa).

Residues 1–25 lie on the Extracellular side of the membrane; the sequence is MEPQNTTQVSMFVLLGFSQTQELQK. N5 is a glycosylation site (N-linked (GlcNAc...) asparagine). Residues 26–49 traverse the membrane as a helical segment; sequence FLFLLFLLVYVTTIVGNLLIMVTV. Topologically, residues 50–57 are cytoplasmic; sequence TFDCRLHT. Residues 58–79 form a helical membrane-spanning segment; that stretch reads PMYFLLRNLALIDLCYSTVTSP. Over 80–100 the chain is Extracellular; sequence KMLVDFLHETKTISYQGCMAQ. C97 and C189 are joined by a disulfide. A helical transmembrane segment spans residues 101–120; that stretch reads IFFFHLLGGGTVFFLSVMAY. Over 121–139 the chain is Cytoplasmic; sequence DRYIAISQPLRYVTIMNTQ. The helical transmembrane segment at 140 to 158 threads the bilayer; sequence LCVGLVVAAWVGGFVHSIV. The Extracellular portion of the chain corresponds to 159-195; it reads QLALILPLPFCGPNILDNFYCDVPQVLRLACTDTSLL. The helical transmembrane segment at 196–219 threads the bilayer; sequence EFLMISNSGLLVIIWFLLLLISYT. The Cytoplasmic segment spans residues 220 to 235; it reads VILVMLRSHSGKARRK. The helical transmembrane segment at 236-258 threads the bilayer; sequence AASTCTTHIIVVSMIFIPCIYIY. Residues 259–269 lie on the Extracellular side of the membrane; sequence TWPFTPFLMDK. The helical transmembrane segment at 270–289 threads the bilayer; the sequence is AVSISYTVMTPMLNPMIYTL. The Cytoplasmic segment spans residues 290-310; it reads RNQDMKAAMRRLGKCLVICRE.

This sequence belongs to the G-protein coupled receptor 1 family.

The protein localises to the cell membrane. Odorant receptor. This Homo sapiens (Human) protein is Olfactory receptor 4D1 (OR4D1).